We begin with the raw amino-acid sequence, 219 residues long: 7-cyano-7-deazaguanine synthase (219 aa).

An ATP-binding site is contributed by 8-18; that stretch reads LSGGMDSAVLL. Zn(2+)-binding residues include Cys185, Cys193, Cys196, and Cys199.

It belongs to the QueC family. The cofactor is Zn(2+).

It catalyses the reaction 7-carboxy-7-deazaguanine + NH4(+) + ATP = 7-cyano-7-deazaguanine + ADP + phosphate + H2O + H(+). The protein operates within purine metabolism; 7-cyano-7-deazaguanine biosynthesis. Its function is as follows. Catalyzes the ATP-dependent conversion of 7-carboxy-7-deazaguanine (CDG) to 7-cyano-7-deazaguanine (preQ(0)). In Desulfotalea psychrophila (strain LSv54 / DSM 12343), this protein is 7-cyano-7-deazaguanine synthase.